The primary structure comprises 140 residues: MADGRPAALDDFCRRFDISFFDLHLTCIFCSHTVDLQDLASFYLKKLSLVFRGGCYYACCSECLRLSARFEQENYFQCSIKAVNLEEVAQRKIKEICIRCICCLRLLDIVEKLDLLYSDQACYLIRGLWRGYCRNCIRKQ.

2 zinc fingers span residues cysteine 27–cysteine 63 and cysteine 100–cysteine 136.

This sequence belongs to the papillomaviridae E6 protein family. In terms of assembly, forms homodimers. Interacts with ubiquitin-protein ligase UBE3A/E6-AP; this interaction stimulates UBE3A ubiquitin activity. Interacts with host BAK1.

The protein localises to the host cytoplasm. The protein resides in the host nucleus. Plays a major role in the induction and maintenance of cellular transformation. E6 associates with host UBE3A/E6-AP ubiquitin-protein ligase and modulates its activity. Protects host keratinocytes from apoptosis by mediating the degradation of host BAK1. May also inhibit host immune response. The sequence is that of Protein E6 from Human papillomavirus 65.